We begin with the raw amino-acid sequence, 252 residues long: Geranylgeranylglyceryl phosphate synthase (252 aa).

Mg(2+) contacts are provided by Asp-27 and Thr-57. Sn-glycerol 1-phosphate-binding positions include 175–181 (YLEAGSG), 206–207 (GG), and 228–229 (GN).

Belongs to the GGGP/HepGP synthase family. Group II subfamily. Mg(2+) serves as cofactor.

The protein resides in the cytoplasm. It carries out the reaction sn-glycerol 1-phosphate + (2E,6E,10E)-geranylgeranyl diphosphate = sn-3-O-(geranylgeranyl)glycerol 1-phosphate + diphosphate. Its pathway is membrane lipid metabolism; glycerophospholipid metabolism. Its function is as follows. Prenyltransferase that catalyzes the transfer of the geranylgeranyl moiety of geranylgeranyl diphosphate (GGPP) to the C3 hydroxyl of sn-glycerol-1-phosphate (G1P). This reaction is the first ether-bond-formation step in the biosynthesis of archaeal membrane lipids. The polypeptide is Geranylgeranylglyceryl phosphate synthase (Metallosphaera sedula (strain ATCC 51363 / DSM 5348 / JCM 9185 / NBRC 15509 / TH2)).